Consider the following 431-residue polypeptide: Serine/threonine-protein kinase PknA (431 aa).

The Cytoplasmic segment spans residues 1-339 (MSPRVGVTLS…RRTFSSGQRA (339 aa)). The region spanning 13–272 (YRLQRLIATG…SGGPFADAVA (260 aa)) is the Protein kinase domain. ATP-binding positions include 19-27 (IATGGMGQV) and Lys-42. The active-site Proton acceptor is Asp-141. A disordered region spans residues 276–333 (AGRRPPRPSQTPPPGRAAPAAIPSGTTARVAANSAGRTAASRRSRPATGGHRPPRRTF). Residues 282–291 (RPSQTPPPGR) show a composition bias toward pro residues. Over residues 292–314 (AAPAAIPSGTTARVAANSAGRTA) the composition is skewed to low complexity. A helical transmembrane segment spans residues 340-360 (LLWAAGVLGALAIIIAVLLVI). The Extracellular portion of the chain corresponds to 361–431 (KAPGDNSPQQ…ASLARYEIAQ (71 aa)). Residues 366 to 418 (NSPQQAPTPTVTTTGNPPASNTGGTDASPRLNWTERGETRHSGLQSWVVPPTP) are disordered. Residues 368-384 (PQQAPTPTVTTTGNPPA) show a composition bias toward low complexity.

This sequence belongs to the protein kinase superfamily. Ser/Thr protein kinase family. Post-translationally, autophosphorylated.

Its subcellular location is the cell membrane. The enzyme catalyses L-seryl-[protein] + ATP = O-phospho-L-seryl-[protein] + ADP + H(+). The catalysed reaction is L-threonyl-[protein] + ATP = O-phospho-L-threonyl-[protein] + ADP + H(+). Functionally, protein kinase that regulates many aspects of mycobacterial physiology. Is a key component of a signal transduction pathway that regulates cell growth, cell shape and cell division via phosphorylation of target proteins. This chain is Serine/threonine-protein kinase PknA (pknA), found in Mycobacterium bovis (strain ATCC BAA-935 / AF2122/97).